The sequence spans 458 residues: Flavonol 3-O-glucosyltransferase UGT76E12 (458 aa).

Residue His-25 is the Proton acceptor of the active site. His-25 serves as a coordination point for an anthocyanidin. The active-site Charge relay is Asp-118. Positions 140, 339, 341, 356, 359, 360, 361, and 364 each coordinate UDP-alpha-D-glucose. An an anthocyanidin-binding site is contributed by Gly-379. The UDP-alpha-D-glucose site is built by Asp-380 and Gln-381.

Belongs to the UDP-glycosyltransferase family.

The catalysed reaction is a flavonol + UDP-alpha-D-glucose = a flavonol 3-O-beta-D-glucoside + UDP + H(+). It carries out the reaction a 7-O-hydroxy-flavonol + UDP-alpha-D-glucose = a flavonol 7-O-beta-D-glucoside + UDP + H(+). Functionally, possesses quercetin 3-O-glucosyltransferase and 7-O-glucosyltransferase activities in vitro. In Arabidopsis thaliana (Mouse-ear cress), this protein is Flavonol 3-O-glucosyltransferase UGT76E12.